The following is a 1381-amino-acid chain: Major capsid protein (1381 aa).

The protein belongs to the herpesviridae major capsid protein family. As to quaternary structure, homomultimer. Makes the hexons and eleven out of twelve pentons. Interacts with triplex proteins 1/TRX1 and 2/TRX2; adjacent capsomers are linked together in groups of three by triplexes, heterotrimeric complexes composed of one molecule of TRX1 and two molecules of TRX2. Interacts with scaffold protein; this interaction allows efficient MCP transport to the host nucleus. Interacts with capsid vertex component 2/CVC2. Interacts with the small capsomere-interacting protein/SCP.

It localises to the virion. Its subcellular location is the host nucleus. Its function is as follows. Self-assembles to form an icosahedral capsid with a T=16 symmetry, about 200 nm in diameter, and consisting of 150 hexons and 12 pentons (total of 162 capsomers). Hexons form the edges and faces of the capsid and are each composed of six MCP molecules. In contrast, one penton is found at each of the 12 vertices. Eleven of the pentons are MCP pentamers, while the last vertex is occupied by the portal complex. The capsid is surrounded by a layer of proteinaceous material designated the tegument which, in turn, is enclosed in an envelope of host cell-derived lipids containing virus-encoded glycoproteins. The protein is Major capsid protein of Epstein-Barr virus (strain AG876) (HHV-4).